The primary structure comprises 117 residues: MVRVKRGVTKHRRHKKILELAKGYQLGRSKLYRHANEAVLKALRYQYRDRRARKRDFRRLWIIRINAAARQHGMPYRDFIHGLKQAGVEVDRKMLADLAVHDPSAFGQLVEVARRAL.

Belongs to the bacterial ribosomal protein bL20 family.

In terms of biological role, binds directly to 23S ribosomal RNA and is necessary for the in vitro assembly process of the 50S ribosomal subunit. It is not involved in the protein synthesizing functions of that subunit. This Thermomicrobium roseum (strain ATCC 27502 / DSM 5159 / P-2) protein is Large ribosomal subunit protein bL20.